The sequence spans 200 residues: Phycocyanobilin lyase subunit beta (200 aa).

Belongs to the CpcE/RpcE/PecE family. CpcE and CpcF associate to form a lyase.

In terms of biological role, required for the chromophorylation of the CpcA gene product. The protein is Phycocyanobilin lyase subunit beta (cpcF) of Nostoc sp. (strain PCC 7120 / SAG 25.82 / UTEX 2576).